The chain runs to 198 residues: Putative 3-methyladenine DNA glycosylase (198 aa).

The protein belongs to the DNA glycosylase MPG family.

The protein is Putative 3-methyladenine DNA glycosylase of Oceanobacillus iheyensis (strain DSM 14371 / CIP 107618 / JCM 11309 / KCTC 3954 / HTE831).